The chain runs to 453 residues: Fibrinogen gamma chain (453 aa).

A signal peptide spans 1-26 (MSWSLHPRNLILYFYALLFLSSTCVA). A Phosphoserine; by FAM20C modification is found at Ser68. An N-linked (GlcNAc...) (complex) asparagine glycan is attached at Asn78. A Fibrinogen C-terminal domain is found at 170 to 416 (QIHDITGKDC…KTTMKIIPFN (247 aa)). Cysteines 179 and 208 form a disulfide. An N-linked (GlcNAc...) asparagine; in variant Asahi glycan is attached at Asn334. Residues Asp344, Asp346, Phe348, and Gly350 each contribute to the Ca(2+) site. A disulfide bridge connects residues Cys352 and Cys365. The gamma-chain polymerization, binding amino end of another fibrin alpha chain stretch occupies residues 400 to 422 (TRWYSMKKTTMKIIPFNRLTIGE). The platelet aggregation and Staphylococcus clumping stretch occupies residues 423-437 (GQQHHLGGAKQVRPE). Gln424 participates in a covalent cross-link: Isoglutamyl lysine isopeptide (Gln-Lys) (interchain with K-432). The segment at 424–453 (QQHHLGGAKQVRPEHPAETEYDSLYPEDDL) is disordered. An Isoglutamyl lysine isopeptide (Lys-Gln) (interchain with Q-424) cross-link involves residue Lys432. Residues 442 to 453 (TEYDSLYPEDDL) are compositionally biased toward acidic residues. Sulfotyrosine is present on residues Tyr444 and Tyr448.

In terms of assembly, heterohexamer; disulfide linked. Contains 2 sets of 3 non-identical chains (alpha, beta and gamma). The 2 heterotrimers are in head to head conformation with the N-termini in a small central domain. Conversion of fibrinogen to fibrin is triggered by thrombin, which cleaves fibrinopeptides A and B from alpha and beta chains, and thus exposes the N-terminal polymerization sites responsible for the formation of the soft clot. The soft clot is converted into the hard clot by factor XIIIA which catalyzes the epsilon-(gamma-glutamyl)lysine cross-linking between gamma chains (stronger) and between alpha chains (weaker) of different monomers. In terms of processing, sulfation of C-terminal tyrosines increases affinity for thrombin. As to expression, detected in blood plasma (at protein level).

Its subcellular location is the secreted. Its function is as follows. Together with fibrinogen alpha (FGA) and fibrinogen beta (FGB), polymerizes to form an insoluble fibrin matrix. Has a major function in hemostasis as one of the primary components of blood clots. In addition, functions during the early stages of wound repair to stabilize the lesion and guide cell migration during re-epithelialization. Was originally thought to be essential for platelet aggregation, based on in vitro studies using anticoagulated blood. However, subsequent studies have shown that it is not absolutely required for thrombus formation in vivo. Enhances expression of SELP in activated platelets via an ITGB3-dependent pathway. Maternal fibrinogen is essential for successful pregnancy. Fibrin deposition is also associated with infection, where it protects against IFNG-mediated hemorrhage. May also facilitate the antibacterial immune response via both innate and T-cell mediated pathways. The protein is Fibrinogen gamma chain (FGG) of Homo sapiens (Human).